An 863-amino-acid chain; its full sequence is DNA replication licensing factor mcm4 (863 aa).

The interval methionine 1–alanine 121 is disordered. 2 stretches are compositionally biased toward polar residues: residues serine 54–glycine 64 and serine 78–valine 99. The segment at cysteine 306–cysteine 331 adopts a C4-type zinc-finger fold. An MCM domain is found at isoleucine 458–valine 667. Residues tyrosine 471, arginine 497, lysine 516, serine 517, asparagine 618, arginine 643, arginine 732, and glutamate 735 each contribute to the ATP site. Positions serine 642–aspartate 645 match the Arginine finger motif.

This sequence belongs to the MCM family. Component of the mcm2-7 complex (RLF-M). The complex forms a toroidal hexameric ring with the proposed subunit order mcm2-mcm6-mcm4-mcm7-mcm3-mcm5. The heterodimer of mmcm3/mcm5 interacts with mcm4, mmcm6, mcm7 and weakly with mcm2. Component of the CMG helicase complex, composed of the mcm2-7 complex, the GINS complex and cdc45. Hyperphosphorylated during mitosis in a mechanism requiring cdc2-cyclin B and other kinases. Undergoes dephosphorylation after exiting mitosis, existing in a partially phosphorylated state in the cytosolic interphase mcm complex which associates with the pre-replication complexes (pre-Rcs). Complete dephosphorylation inactivates the mcm complex, preventing its binding to chromatin. Becomes actively phosphorylated during S phase once the mcm complex is assembled on the chromatin. This chromatin-associated phosphorylation occurs during the activation of the pre-Rcs and is independent of cdks. Phosphorylated by the cdc7-dbf4b complex.

It is found in the nucleus. The protein localises to the chromosome. It carries out the reaction ATP + H2O = ADP + phosphate + H(+). Acts as a component of the MCM2-7 complex (MCM complex) which is the replicative helicase essential for 'once per cell cycle' DNA replication initiation and elongation in eukaryotic cells. Core component of CDC45-MCM-GINS (CMG) helicase, the molecular machine that unwinds template DNA during replication, and around which the replisome is built. The active ATPase sites in the MCM2-7 ring are formed through the interaction surfaces of two neighboring subunits such that a critical structure of a conserved arginine finger motif is provided in trans relative to the ATP-binding site of the Walker A box of the adjacent subunit. The six ATPase active sites, however, are likely to contribute differentially to the complex helicase activity. This is DNA replication licensing factor mcm4 from Xenopus tropicalis (Western clawed frog).